A 154-amino-acid polypeptide reads, in one-letter code: Large ribosomal subunit protein uL22 (154 aa).

Belongs to the universal ribosomal protein uL22 family. In terms of assembly, part of the 50S ribosomal subunit.

In terms of biological role, this protein binds specifically to 23S rRNA. It makes multiple contacts with different domains of the 23S rRNA in the assembled 50S subunit and ribosome. Functionally, the globular domain of the protein is located near the polypeptide exit tunnel on the outside of the subunit, while an extended beta-hairpin is found that lines the wall of the exit tunnel in the center of the 70S ribosome. In Methanoregula boonei (strain DSM 21154 / JCM 14090 / 6A8), this protein is Large ribosomal subunit protein uL22.